The chain runs to 297 residues: Taste receptor type 2 member 4 (297 aa).

At 1 to 11 the chain is on the extracellular side; that stretch reads MLWELYVFVFA. The chain crosses the membrane as a helical span at residues 12-32; it reads ASVFLNFVGIIANLFIIVIII. At 33-46 the chain is on the cytoplasmic side; that stretch reads KTWVNSRRIASPDR. A helical membrane pass occupies residues 47–67; that stretch reads ILFSLAITRFLTLGLFLLNSV. The Extracellular segment spans residues 68–80; the sequence is YIATNTGRSVYFS. The helical transmembrane segment at 81 to 101 threads the bilayer; that stretch reads TFFLLCWKFLDANSLWLVTIL. Residues 102-128 lie on the Cytoplasmic side of the membrane; the sequence is NSLYCVKITNFQHPVFLLLKRTISMKT. A helical transmembrane segment spans residues 129–149; sequence TSLLLACLLISALTTLLYYML. Residues 150 to 171 are Extracellular-facing; it reads SQISRFPEHIIGRNDTSFDLSD. An N-linked (GlcNAc...) asparagine glycan is attached at Asn-163. Residues 172–192 form a helical membrane-spanning segment; it reads GILTLVASLVLNSLLQFMLNV. Residues 193 to 229 are Cytoplasmic-facing; it reads TFASLLIHSLRRHIQKMQRNRTSFWNPQTEAHMGAMR. Residues 230-250 form a helical membrane-spanning segment; it reads LMICFLVLYIPYSIATLLYLP. Topologically, residues 251–260 are extracellular; it reads SYMRKNLRAQ. The helical transmembrane segment at 261-281 threads the bilayer; it reads AICMIITAAYPPGHSVLLIIT. Residues 282–297 lie on the Cytoplasmic side of the membrane; the sequence is HHKLKAKAKKIFCFYK.

The protein belongs to the G-protein coupled receptor T2R family. In terms of tissue distribution, expressed in subsets of taste receptor cells of the tongue and palate epithelium and exclusively in gustducin-positive cells. Expressed in 15% taste bud cells in circumvallate and foliate papillae but only in 2% in fungiform papillae.

It is found in the membrane. It localises to the cell projection. The protein localises to the cilium membrane. Functionally, gustducin-coupled receptor for denatonium and N(6)-propyl-2-thiouracil implicated in the perception of bitter compounds in the oral cavity and the gastrointestinal tract. Signals through PLCB2 and the calcium-regulated cation channel TRPM5. In airway epithelial cells, binding of denatonium increases the intracellular calcium ion concentration and stimulates ciliary beat frequency. The sequence is that of Taste receptor type 2 member 4 (Tas2r4) from Mus musculus (Mouse).